The sequence spans 534 residues: Cytochrome P450 78A9 (534 aa).

A helical membrane pass occupies residues 26–46 (LALSLLVASLASLALSLFFWS). Cys-474 provides a ligand contact to heme.

Belongs to the cytochrome P450 family. Heme serves as cofactor. In terms of tissue distribution, expressed in the funiculus of developing ovules.

Its subcellular location is the membrane. In terms of biological role, plays a role in seed and fruit development. Functions probably in association with CYP78A6 in the regulation of seed growth. The polypeptide is Cytochrome P450 78A9 (CYP78A9) (Arabidopsis thaliana (Mouse-ear cress)).